The chain runs to 305 residues: UDP-3-O-acyl-N-acetylglucosamine deacetylase (305 aa).

Zn(2+) is bound by residues His78, His237, and Asp241. His264 serves as the catalytic Proton donor.

This sequence belongs to the LpxC family. It depends on Zn(2+) as a cofactor.

It carries out the reaction a UDP-3-O-[(3R)-3-hydroxyacyl]-N-acetyl-alpha-D-glucosamine + H2O = a UDP-3-O-[(3R)-3-hydroxyacyl]-alpha-D-glucosamine + acetate. It functions in the pathway glycolipid biosynthesis; lipid IV(A) biosynthesis; lipid IV(A) from (3R)-3-hydroxytetradecanoyl-[acyl-carrier-protein] and UDP-N-acetyl-alpha-D-glucosamine: step 2/6. In terms of biological role, catalyzes the hydrolysis of UDP-3-O-myristoyl-N-acetylglucosamine to form UDP-3-O-myristoylglucosamine and acetate, the committed step in lipid A biosynthesis. This Dechloromonas aromatica (strain RCB) protein is UDP-3-O-acyl-N-acetylglucosamine deacetylase.